A 259-amino-acid polypeptide reads, in one-letter code: Exotoxin A regulatory protein (259 aa).

The protein localises to the cell inner membrane. Functionally, positive regulation of toxA gene transcription. This Pseudomonas aeruginosa (strain ATCC 15692 / DSM 22644 / CIP 104116 / JCM 14847 / LMG 12228 / 1C / PRS 101 / PAO1) protein is Exotoxin A regulatory protein (toxR).